The sequence spans 62 residues: U10-hottentoxin-Hj3a (62 aa).

The signal sequence occupies residues 1 to 22 (MQKLLIILILFCILKFNVDVEG). Intrachain disulfides connect Cys28–Cys46, Cys33–Cys59, and Cys37–Cys61.

It belongs to the short scorpion toxin superfamily. Potassium channel inhibitor family. Alpha-KTx 23 subfamily. As to expression, expressed by the venom gland.

It is found in the secreted. May block potassium channels. This is U10-hottentoxin-Hj3a from Hottentotta judaicus (Black scorpion).